The following is a 445-amino-acid chain: MGKKDKRSKLEGDELAEAQQKGSFQLPSSNETAKLDASQWPLLLKNYDKLNVRTNHYTPHVEGVSPLKRDIKNYISSGFFNLDKPSNPSSHEVVSWIKRILRCEKTGHSGTLDPKVSGCLIVCIDRTTRLAKSQQGAGKEYICIFKLHEEVEDERKVKQALEKLTGALFQRPPLISAVKRQLRIRTVYENKFIEYDPAQQMGIFNCICESGTYVRTICVHLGLILGCGGQMQELRRNRSGICDENENMVTMHDVLDAQYMLDTQKDESYMRHIVRPLEALLTQHKRVVVKDSCVNAICYGAKILIPGILRYDDDIEVGKEIVIMTTKGEAICIAIAQMSTSTIASVDHGIVAKSKRVIMERDVYGRKWGLGPVASKKKQMVKDGLLDKFGKPNITTPKSWAKEYVQTDKVKKEQEDKEDEEEEEAPKKKSKKAAKKEVSSSSDSE.

The segment at 1–32 is disordered; sequence MGKKDKRSKLEGDELAEAQQKGSFQLPSSNET. Positions 20-32 are enriched in polar residues; it reads QKGSFQLPSSNET. Catalysis depends on aspartate 113, which acts as the Nucleophile. The 76-residue stretch at 284 to 359 folds into the PUA domain; sequence HKRVVVKDSC…IVAKSKRVIM (76 aa). Residues 407-445 are disordered; sequence TDKVKKEQEDKEDEEEEEAPKKKSKKAAKKEVSSSSDSE.

The protein belongs to the pseudouridine synthase TruB family. As to quaternary structure, component of the small nucleolar ribonucleoprotein particle containing H/ACA-type snoRNAs (H/ACA snoRNPs).

Its subcellular location is the nucleus. It is found in the nucleolus. The enzyme catalyses a uridine in RNA = a pseudouridine in RNA. Its function is as follows. Plays a central role in ribosomal RNA processing. Probable catalytic subunit of H/ACA small nucleolar ribonucleoprotein (H/ACA snoRNP) complex, which catalyzes pseudouridylation of rRNA. This involves the isomerization of uridine such that the ribose is subsequently attached to C5, instead of the normal N1. Pseudouridine ('psi') residues may serve to stabilize the conformation of rRNAs. The polypeptide is Putative H/ACA ribonucleoprotein complex subunit 4 (Caenorhabditis briggsae).